The primary structure comprises 83 residues: Hainantoxin-III 11 (83 aa).

The first 21 residues, 1–21 (MKASMFLALAGLVLLFVVGYA), serve as a signal peptide directing secretion. Residues 22–48 (SESEEKDFPRELLSKIFAVDDFKGEER) constitute a propeptide that is removed on maturation. 3 cysteine pairs are disulfide-bonded: C50–C65, C57–C70, and C64–C77. The residue at position 81 (L81) is a Leucine amide.

The protein belongs to the neurotoxin 10 (Hwtx-1) family. 15 (Hntx-3) subfamily. As to quaternary structure, monomer. Expressed by the venom gland.

It is found in the secreted. Its function is as follows. Selective antagonist of neuronal tetrodotoxin (TTX)-sensitive voltage-gated sodium channels (IC(50)=1270 nM on Nav1.1/SCN1A, 270 nM on Nav1.2/SCN2A, 491 nM on Nav1.3/SCN3A and 232 nM on Nav1.7/SCN9A). This toxin suppress Nav1.7 current amplitude without significantly altering the activation, inactivation, and repriming kinetics. Short extreme depolarizations partially activate the toxin-bound channel, indicating voltage-dependent inhibition of this toxin. This toxin increases the deactivation of the Nav1.7 current after extreme depolarizations. The toxin-Nav1.7 complex is gradually dissociated upon prolonged strong depolarizations in a voltage-dependent manner, and the unbound toxin rebinds to Nav1.7 after a long repolarization. Moreover, analysis of chimeric channels showed that the DIIS3-S4 linker is critical for toxin binding to Nav1.7. These data are consistent with this toxin interacting with Nav1.7 site 4 and trapping the domain II voltage sensor in the closed state. This chain is Hainantoxin-III 11, found in Cyriopagopus hainanus (Chinese bird spider).